Here is a 415-residue protein sequence, read N- to C-terminus: Tyrosine--tRNA ligase (415 aa).

Tyr-34 contributes to the L-tyrosine binding site. The 'HIGH' region motif lies at 39–48 (PTADSLHLGH). L-tyrosine is bound by residues Tyr-164 and Gln-168. The 'KMSKS' region signature appears at 226–230 (KFGKS). Lys-229 contributes to the ATP binding site. The S4 RNA-binding domain maps to 348 to 415 (KNVVDFLVDG…KKKYFLGKVK (68 aa)).

The protein belongs to the class-I aminoacyl-tRNA synthetase family. TyrS type 1 subfamily. In terms of assembly, homodimer.

It is found in the cytoplasm. The enzyme catalyses tRNA(Tyr) + L-tyrosine + ATP = L-tyrosyl-tRNA(Tyr) + AMP + diphosphate + H(+). In terms of biological role, catalyzes the attachment of tyrosine to tRNA(Tyr) in a two-step reaction: tyrosine is first activated by ATP to form Tyr-AMP and then transferred to the acceptor end of tRNA(Tyr). This chain is Tyrosine--tRNA ligase, found in Leuconostoc mesenteroides subsp. mesenteroides (strain ATCC 8293 / DSM 20343 / BCRC 11652 / CCM 1803 / JCM 6124 / NCDO 523 / NBRC 100496 / NCIMB 8023 / NCTC 12954 / NRRL B-1118 / 37Y).